The sequence spans 401 residues: Beta-lactamase (401 aa).

Residues 1–39 (MKLFTSTLTAKKSSTHKPLISLALSVLISTLLISETAQA) form the signal peptide. S102 acts as the Acyl-ester intermediate in catalysis. The Proton acceptor role is filled by Y188. Residue 353–355 (KTG) participates in substrate binding.

Belongs to the class-C beta-lactamase family.

Its subcellular location is the secreted. It catalyses the reaction a beta-lactam + H2O = a substituted beta-amino acid. Functionally, this protein is a serine beta-lactamase with a substrate specificity for cephalosporins. This is Beta-lactamase (ampC) from Psychrobacter immobilis.